We begin with the raw amino-acid sequence, 310 residues long: tRNA dimethylallyltransferase (310 aa).

Residue 10-17 (GPTAVGKS) coordinates ATP. 12–17 (TAVGKS) contributes to the substrate binding site. 3 interaction with substrate tRNA regions span residues 35 to 38 (DSAQ), 159 to 163 (QRIQR), and 274 to 281 (KRQITWLR).

This sequence belongs to the IPP transferase family. As to quaternary structure, monomer. Mg(2+) is required as a cofactor.

It catalyses the reaction adenosine(37) in tRNA + dimethylallyl diphosphate = N(6)-dimethylallyladenosine(37) in tRNA + diphosphate. In terms of biological role, catalyzes the transfer of a dimethylallyl group onto the adenine at position 37 in tRNAs that read codons beginning with uridine, leading to the formation of N6-(dimethylallyl)adenosine (i(6)A). This is tRNA dimethylallyltransferase from Halorhodospira halophila (strain DSM 244 / SL1) (Ectothiorhodospira halophila (strain DSM 244 / SL1)).